A 356-amino-acid chain; its full sequence is Heparan sulfate 2-O-sulfotransferase 1 (356 aa).

Over 1-11 the chain is Cytoplasmic; sequence MGLLRIMMPPK. The helical; Signal-anchor for type II membrane protein transmembrane segment at 12 to 28 threads the bilayer; it reads LQLLAVVAFAVAMLFLE. The stretch at 24-51 forms a coiled coil; that stretch reads MLFLENQIQKLEESRAKLERAIARHEVR. Topologically, residues 29–356 are lumenal; sequence NQIQKLEESR…FYEKIYPKSN (328 aa). The adenosine 3',5'-bisphosphate site is built by Lys-83, Thr-84, Ala-85, Ser-86, Thr-87, and Ser-88. N-linked (GlcNAc...) asparagine glycosylation is found at Asn-108 and Asn-127. Residues His-140 and His-142 contribute to the active site. Positions 164 and 172 each coordinate adenosine 3',5'-bisphosphate. Cystine bridges form between Cys-201–Cys-209 and Cys-222–Cys-228. Adenosine 3',5'-bisphosphate-binding residues include Tyr-279, Ser-285, Thr-290, and Lys-293.

The protein belongs to the sulfotransferase 3 family. As to quaternary structure, homotrimer. Interacts with the C5-epimerase GLCE. In terms of processing, N-glycosylated.

The protein localises to the golgi apparatus membrane. Functionally, catalyzes the transfer of a sulfo group from 3'-phospho-5'-adenylyl sulfate (PAPS) to the 2-OH position of iduronic acid (IdoA) or glucuronic acid (GlcA) within the heparan sulfate (HS) chain and participates in HS biosynthesis. Required for metanephric development of kidney formation, suggesting that 2-O-sulfation within HS is essential for signaling between ureteric bud and metanephric mesenchyme. The polypeptide is Heparan sulfate 2-O-sulfotransferase 1 (Cricetulus griseus (Chinese hamster)).